Consider the following 1349-residue polypeptide: Serine/threonine-protein kinase GIN4 (1349 aa).

The span at 1-20 (MPHSRQPSISSSIMSQSNHN) shows a compositional bias: low complexity. Residues 1–30 (MPHSRQPSISSSIMSQSNHNHPQKIGPWKL) are disordered. Phosphoserine occurs at positions 10, 11, 12, and 15. The region spanning 28–288 (WKLGKTLGRG…TEKILRHPLL (261 aa)) is the Protein kinase domain. ATP is bound by residues 34–42 (LGRGATGRV) and Lys-57. Thr-69 carries the post-translational modification Phosphothreonine. The active-site Proton acceptor is the Asp-158. Thr-191 is modified (phosphothreonine). Phosphoserine occurs at positions 294, 300, and 303. Disordered stretches follow at residues 366 to 498 (QEDN…KAKP) and 510 to 532 (SNFS…YMID). Residues 369–384 (NTNNNSPKKSTSFNNK) show a composition bias toward low complexity. A phosphoserine mark is found at Ser-388, Ser-390, and Ser-393. Thr-397 is modified (phosphothreonine). 2 stretches are compositionally biased toward polar residues: residues 406-418 (ISVS…QYKS) and 426-442 (ANRN…SANN). Ser-407 and Ser-409 each carry phosphoserine. Phosphothreonine is present on Thr-412. At Ser-413 the chain carries Phosphoserine. Residues 443–470 (SPRKSPYKSPYRSPYRSPYKSPSKRYSY) show a composition bias toward low complexity. 5 positions are modified to phosphoserine: Ser-455, Ser-469, Ser-473, Ser-477, and Ser-485. A compositionally biased stretch (polar residues) spans 471–488 (NQSPTKSPYGRRSNSQRQ). Ser-556 carries the post-translational modification Phosphoserine. Low complexity predominate over residues 570-585 (RNSIIGKNNNNSNSNK). The disordered stretch occupies residues 570-593 (RNSIIGKNNNNSNSNKRMSKRKSI). The residue at position 634 (Ser-634) is a Phosphoserine. Residues 661 to 701 (EEKEAKEYERLMELERKKHEAELKARRELEKKKRRQKRRSI) are a coiled coil. Residues 712–737 (KNDADPNNSEQELVDEGIKQPKRQSK) form a disordered region. Phosphoserine is present on residues Ser-720 and Ser-746. The disordered stretch occupies residues 756-798 (TLEDVENLKRRSASQPVPKRRQTPVLTRRPVSRLDPLWQAHEN). Phosphothreonine occurs at positions 778, 869, and 876. Ser-891 carries the phosphoserine modification. Phosphothreonine is present on Thr-941. Ser-973 is subject to Phosphoserine. Thr-990 and Thr-992 each carry phosphothreonine. The residue at position 999 (Ser-999) is a Phosphoserine. Residues 1011-1229 (RTSYYDGSGK…AESKEEKPKS (219 aa)) are disordered. Residues 1024–1040 (RASTTKRYNVHSSSGQR) show a composition bias toward polar residues. Over residues 1044–1053 (KVPDLPKNDY) the composition is skewed to basic and acidic residues. The residue at position 1056 (Thr-1056) is a Phosphothreonine. 6 positions are modified to phosphoserine: Ser-1059, Ser-1074, Ser-1077, Ser-1078, Ser-1080, and Ser-1094. Residues 1083 to 1094 (VFDKIKLPDGKS) are compositionally biased toward basic and acidic residues. Thr-1095 carries the phosphothreonine modification. 2 positions are modified to phosphoserine: Ser-1097 and Ser-1098. Thr-1106 carries the post-translational modification Phosphothreonine. A compositionally biased stretch (polar residues) spans 1134–1149 (IESSQPMSKVRGNNSS). Residue Ser-1154 is modified to Phosphoserine. Residues 1202-1215 (NNTNAATNTTTQQQ) are compositionally biased toward low complexity. At Ser-1218 the chain carries Phosphoserine.

It belongs to the protein kinase superfamily. CAMK Ser/Thr protein kinase family. NIM1 subfamily. As to quaternary structure, associates with the septin complex which consists of CDC3, CDC10, CDC11, CDC12, and SEP7. In terms of processing, hyperphosphorylated during mitosis at dozens of sites. Among these, 7 have perfect or minimal CDK consensus sites and are CDC28 targets.

The protein resides in the cytoplasm. It is found in the bud neck. It catalyses the reaction L-seryl-[protein] + ATP = O-phospho-L-seryl-[protein] + ADP + H(+). It carries out the reaction L-threonyl-[protein] + ATP = O-phospho-L-threonyl-[protein] + ADP + H(+). Serine/threonine-protein kinase which regulates the localization and the function of the septins during mitosis. Involved in the formation of the septin ring but not the basal septin band. Phosphorylates septins CDC11 and SEP7. Required for the transition from pseudohyphae to hyphae. Acts upstream of IRS4 and INP51 in regulating cell wall integrity responses. Involved in propolis-induced cell death. The polypeptide is Serine/threonine-protein kinase GIN4 (GIN4) (Candida albicans (strain SC5314 / ATCC MYA-2876) (Yeast)).